Here is a 288-residue protein sequence, read N- to C-terminus: Fe-S cluster assembly protein dre2 (288 aa).

The segment at 1-127 (MSSSVLVLTS…LSRPNQVEAV (127 aa)) is N-terminal SAM-like domain. The interval 128 to 177 (PIKLSNKNGQSASKNKILDFLKSDKENLISGDDDQELIDEDELLDESAHD) is linker. Residues C185, C196, C199, and C201 each contribute to the [2Fe-2S] cluster site. The tract at residues 185–201 (CKPEPGKKKRACKNCTC) is fe-S binding site A. The [4Fe-4S] cluster site is built by C244, C247, C255, and C258. 2 short sequence motifs (cx2C motif) span residues 244-247 (CGNC) and 255-258 (CSGC). Residues 244–258 (CGNCYLGDAFRCSGC) form a fe-S binding site B region.

This sequence belongs to the anamorsin family. Monomer. Interacts with tah18. Interacts with tim40. It depends on [2Fe-2S] cluster as a cofactor. Requires [4Fe-4S] cluster as cofactor.

It is found in the cytoplasm. It localises to the mitochondrion intermembrane space. Its function is as follows. Component of the cytosolic iron-sulfur (Fe-S) protein assembly (CIA) machinery required for the maturation of extramitochondrial Fe-S proteins. Part of an electron transfer chain functioning in an early step of cytosolic Fe-S biogenesis, facilitating the de novo assembly of a [4Fe-4S] cluster on the scaffold complex cfd1-nbp35. Electrons are transferred to dre2 from NADPH via the FAD- and FMN-containing protein tah18. Tah18-dre2 are also required for the assembly of the diferric tyrosyl radical cofactor of ribonucleotide reductase (RNR), probably by providing electrons for reduction during radical cofactor maturation in the catalytic small subunit suc22. The protein is Fe-S cluster assembly protein dre2 of Schizosaccharomyces pombe (strain 972 / ATCC 24843) (Fission yeast).